The chain runs to 435 residues: Methylenetetrahydrofolate--tRNA-(uracil-5-)-methyltransferase TrmFO (435 aa).

FAD is bound at residue 7–12 (GAGLAG).

Belongs to the MnmG family. TrmFO subfamily. FAD is required as a cofactor.

The protein localises to the cytoplasm. It carries out the reaction uridine(54) in tRNA + (6R)-5,10-methylene-5,6,7,8-tetrahydrofolate + NADH + H(+) = 5-methyluridine(54) in tRNA + (6S)-5,6,7,8-tetrahydrofolate + NAD(+). It catalyses the reaction uridine(54) in tRNA + (6R)-5,10-methylene-5,6,7,8-tetrahydrofolate + NADPH + H(+) = 5-methyluridine(54) in tRNA + (6S)-5,6,7,8-tetrahydrofolate + NADP(+). Catalyzes the folate-dependent formation of 5-methyl-uridine at position 54 (M-5-U54) in all tRNAs. The sequence is that of Methylenetetrahydrofolate--tRNA-(uracil-5-)-methyltransferase TrmFO from Thermotoga neapolitana (strain ATCC 49049 / DSM 4359 / NBRC 107923 / NS-E).